A 132-amino-acid polypeptide reads, in one-letter code: DNA-directed RNA polymerase subunit omega (132 aa).

Positions 89–109 are disordered; the sequence is HSSESESIFNTSSQEEGTSFD. Polar residues predominate over residues 96 to 105; that stretch reads IFNTSSQEEG.

Belongs to the RNA polymerase subunit omega family. In terms of assembly, the RNAP catalytic core consists of 2 alpha, 1 beta, 1 beta' and 1 omega subunit. When a sigma factor is associated with the core the holoenzyme is formed, which can initiate transcription.

It carries out the reaction RNA(n) + a ribonucleoside 5'-triphosphate = RNA(n+1) + diphosphate. In terms of biological role, promotes RNA polymerase assembly. Latches the N- and C-terminal regions of the beta' subunit thereby facilitating its interaction with the beta and alpha subunits. This is DNA-directed RNA polymerase subunit omega from Bartonella tribocorum (strain CIP 105476 / IBS 506).